Here is a 177-residue protein sequence, read N- to C-terminus: MSRVAKAPVAIPAGVEVKLNGQEITVKGAKGELTRVLNDAVVIAQEENNLTFGPKEGAANAWAQAGTARALVNNMVVGVTEGFTKKLTLKGVGYRAAIKGNAVGLTLGFSHPVEHELPAGIKAECPSQTEIIITGCDKQLVGQVAADIRSYRQPEPYKGKGVRYADENVRTKEAKKK.

The protein belongs to the universal ribosomal protein uL6 family. Part of the 50S ribosomal subunit.

In terms of biological role, this protein binds to the 23S rRNA, and is important in its secondary structure. It is located near the subunit interface in the base of the L7/L12 stalk, and near the tRNA binding site of the peptidyltransferase center. This is Large ribosomal subunit protein uL6 from Vibrio campbellii (strain ATCC BAA-1116).